Here is a 685-residue protein sequence, read N- to C-terminus: MAATAAAAAAAPPADPPDSSPAASSPPRPSPEELVARAVAPVKPAFLRPPLSATPPKDEGKANGGGAVVAEKKSKRQLKRERKQEQKSSSHLCIEVGKSGNVSSCKYGDSCRFSHDIDAYLAQKPADLEGTCPFTNLDQLCPYGLTCRFLGTHKDIHAASGNLSEKHEINALNKDIQKLLWKNKYKFPKASAQIKLLGLKEVIKSKPDAANDDKKVNHDNLDGNDDENKEPLCNPPVNAECDSTLCEELDRSEGEPLIDNSIPCVEPRPTKKSKVESDEIDKHGAGTLNTNTESEDPNLSNGLEPSNNSSSCRTDLITTPHLREKKIIDFREKLYLAPLTTVGNLPFRRLCKTLGADITCGEMAMCTNLLQGQASEWALLRRHSSEDLFGVQICGAYPDTVARTVELVDNECSVDFIDINMGCPIDIVVNKGAGSSLLTKPMRIKSIVQAASTVTEKPLTVKVRTAFFEGRNRADSIVSDIYDWGASAITVHGRSRQQRYSKLADWDYIYQCAQKAPDQLHVVGNGDVFSFTDWNKHVSGCSKISTSMIARGALIKPWIFTEVKEQRHWDITSGERFNILKDFVSFGLEHWGSDSKGVETTRYFLLEWLSYTCRYIPVGLLDVIPQRLNWRPPSYCGRDDLETLMISDSAADWIRISEMLLGKVPEGFTFTPKHKSNAYDRAENG.

Low complexity predominate over residues 1-12 (MAATAAAAAAAP). Disordered stretches follow at residues 1 to 91 (MAAT…SSSH), 209 to 234 (AANDDKKVNHDNLDGNDDENKEPLCN), and 257 to 314 (LIDN…SCRT). Residues 13–29 (PADPPDSSPAASSPPRP) are compositionally biased toward pro residues. The C3H1-type zinc-finger motif lies at 87 to 118 (KSSSHLCIEVGKSGNVSSCKYGDSCRFSHDID). Basic and acidic residues-rich tracts occupy residues 209–221 (AANDDKKVNHDNL) and 273–284 (SKVESDEIDKHG). Residues 287–314 (TLNTNTESEDPNLSNGLEPSNNSSSCRT) show a composition bias toward polar residues. FMN contacts are provided by residues 338–340 (PLT) and Gln-392. Cys-423 acts as the Proton donor in catalysis. FMN contacts are provided by residues Lys-462, His-492, 525 to 527 (NGD), and 550 to 551 (AR).

This sequence belongs to the Dus family. Dus3 subfamily. The cofactor is FMN.

It catalyses the reaction 5,6-dihydrouridine(47) in tRNA + NAD(+) = uridine(47) in tRNA + NADH + H(+). It carries out the reaction 5,6-dihydrouridine(47) in tRNA + NADP(+) = uridine(47) in tRNA + NADPH + H(+). The catalysed reaction is a 5,6-dihydrouridine in mRNA + NAD(+) = a uridine in mRNA + NADH + H(+). The enzyme catalyses a 5,6-dihydrouridine in mRNA + NADP(+) = a uridine in mRNA + NADPH + H(+). Functionally, catalyzes the synthesis of dihydrouridine, a modified base found in the D-loop of most tRNAs. Specifically modifies U47 in cytoplasmic tRNAs. Catalyzes the synthesis of dihydrouridine in some mRNAs, thereby affecting their translation. The polypeptide is tRNA-dihydrouridine(47) synthase [NAD(P)(+)]-like (Oryza sativa subsp. japonica (Rice)).